The following is a 335-amino-acid chain: Fructose-1,6-bisphosphatase class 1 (335 aa).

Positions 92, 114, 116, and 117 each coordinate Mg(2+). Substrate contacts are provided by residues 117-120 (DGSS), Asn209, and Lys275. Glu281 lines the Mg(2+) pocket.

Belongs to the FBPase class 1 family. Homotetramer. It depends on Mg(2+) as a cofactor.

The protein resides in the cytoplasm. The enzyme catalyses beta-D-fructose 1,6-bisphosphate + H2O = beta-D-fructose 6-phosphate + phosphate. Its pathway is carbohydrate biosynthesis; gluconeogenesis. The protein is Fructose-1,6-bisphosphatase class 1 of Delftia acidovorans (strain DSM 14801 / SPH-1).